The sequence spans 306 residues: Pantothenate kinase (306 aa).

Position 90 to 97 (90 to 97) interacts with ATP; that stretch reads GSVAVGKS.

This sequence belongs to the prokaryotic pantothenate kinase family.

It localises to the cytoplasm. It carries out the reaction (R)-pantothenate + ATP = (R)-4'-phosphopantothenate + ADP + H(+). The protein operates within cofactor biosynthesis; coenzyme A biosynthesis; CoA from (R)-pantothenate: step 1/5. This chain is Pantothenate kinase (coaA), found in Listeria innocua serovar 6a (strain ATCC BAA-680 / CLIP 11262).